The sequence spans 113 residues: Ribonuclease P protein component (113 aa).

Belongs to the RnpA family. Consists of a catalytic RNA component (M1 or rnpB) and a protein subunit.

It catalyses the reaction Endonucleolytic cleavage of RNA, removing 5'-extranucleotides from tRNA precursor.. RNaseP catalyzes the removal of the 5'-leader sequence from pre-tRNA to produce the mature 5'-terminus. It can also cleave other RNA substrates such as 4.5S RNA. The protein component plays an auxiliary but essential role in vivo by binding to the 5'-leader sequence and broadening the substrate specificity of the ribozyme. This Desulforamulus reducens (strain ATCC BAA-1160 / DSM 100696 / MI-1) (Desulfotomaculum reducens) protein is Ribonuclease P protein component.